Reading from the N-terminus, the 108-residue chain is Flagellar hook-basal body complex protein FliE (108 aa).

Belongs to the FliE family.

The protein localises to the bacterial flagellum basal body. The sequence is that of Flagellar hook-basal body complex protein FliE from Pseudomonas fluorescens (strain ATCC BAA-477 / NRRL B-23932 / Pf-5).